Reading from the N-terminus, the 155-residue chain is Glutamyl-tRNA(Gln) amidotransferase subunit C, mitochondrial (155 aa).

Residues 1 to 20 (MWAQAARVQFRAPLDRGRSF) constitute a mitochondrion transit peptide. Positions 19–42 (SFASKVGPRGKVQAADPKTQAPRL) are disordered.

The protein belongs to the GatC family. Subunit of the heterotrimeric GatCAB amidotransferase (AdT) complex, composed of A (QRSL1), B (GATB) and C (GATC) subunits.

It is found in the mitochondrion. The enzyme catalyses L-glutamyl-tRNA(Gln) + L-glutamine + ATP + H2O = L-glutaminyl-tRNA(Gln) + L-glutamate + ADP + phosphate + H(+). Functionally, allows the formation of correctly charged Gln-tRNA(Gln) through the transamidation of misacylated Glu-tRNA(Gln) in the mitochondria. The reaction takes place in the presence of glutamine and ATP through an activated gamma-phospho-Glu-tRNA(Gln). This Rattus norvegicus (Rat) protein is Glutamyl-tRNA(Gln) amidotransferase subunit C, mitochondrial (Gatc).